The primary structure comprises 378 residues: 3-dehydroquinate synthase (378 aa).

NAD(+) contacts are provided by residues 115–119, 139–140, Lys-152, and Lys-161; these read GVVGD and TS. Zn(2+) contacts are provided by Glu-194, His-256, and His-275.

This sequence belongs to the sugar phosphate cyclases superfamily. Dehydroquinate synthase family. Co(2+) is required as a cofactor. Requires Zn(2+) as cofactor. The cofactor is NAD(+).

Its subcellular location is the cytoplasm. The catalysed reaction is 7-phospho-2-dehydro-3-deoxy-D-arabino-heptonate = 3-dehydroquinate + phosphate. Its pathway is metabolic intermediate biosynthesis; chorismate biosynthesis; chorismate from D-erythrose 4-phosphate and phosphoenolpyruvate: step 2/7. Catalyzes the conversion of 3-deoxy-D-arabino-heptulosonate 7-phosphate (DAHP) to dehydroquinate (DHQ). The protein is 3-dehydroquinate synthase of Brucella anthropi (strain ATCC 49188 / DSM 6882 / CCUG 24695 / JCM 21032 / LMG 3331 / NBRC 15819 / NCTC 12168 / Alc 37) (Ochrobactrum anthropi).